Here is a 206-residue protein sequence, read N- to C-terminus: MALKYKLILASGSPRRVDLLNQAGIEPSRLMPMDIDETPKKSEHPRSLARRLSAEKAEAALAAIKGDITWKGSYILSADTVVAVGRRILGKAEFADEALSSLHLLSGRNHLVYTGICLVTPDRKIRQKIVETKVRFKRLSGFEIENYLASGQWRGKAGAYGIQGLAGTFVQKMVGSYTNVVGLPLYETILLLTGEGFDVHSRWPEG.

The active-site Proton acceptor is the Asp-79.

This sequence belongs to the Maf family. YhdE subfamily. It depends on a divalent metal cation as a cofactor.

The protein resides in the cytoplasm. The enzyme catalyses dTTP + H2O = dTMP + diphosphate + H(+). It carries out the reaction UTP + H2O = UMP + diphosphate + H(+). Its function is as follows. Nucleoside triphosphate pyrophosphatase that hydrolyzes dTTP and UTP. May have a dual role in cell division arrest and in preventing the incorporation of modified nucleotides into cellular nucleic acids. This Rhizobium etli (strain ATCC 51251 / DSM 11541 / JCM 21823 / NBRC 15573 / CFN 42) protein is dTTP/UTP pyrophosphatase.